A 541-amino-acid polypeptide reads, in one-letter code: Interleukin-18 receptor 1 (541 aa).

The N-terminal stretch at 1-18 (MNCRELPLTLWVLISVST) is a signal peptide. 2 disulfide bridges follow: C22–C41 and C43–C81. The Extracellular segment spans residues 22–329 (CTSRPHITVV…ADIPGHVFTR (308 aa)). 3 consecutive Ig-like C2-type domains span residues 33–121 (GEPF…SCFT), 133–212 (KKFF…DRSN), and 220–312 (PKLN…KSFI). N-linked (GlcNAc...) asparagine glycans are attached at residues N91, N102, N150, N197, N203, N236, N255, and N297. Disulfide bonds link C119/C158 and C140/C185. C237 and C298 are joined by a disulfide. Residues 330–350 (GMIIAVLILVAVVCLVTVCVI) form a helical membrane-spanning segment. Topologically, residues 351 to 541 (YRVDLVLFYR…PEVLPVLSES (191 aa)) are cytoplasmic. In terms of domain architecture, TIR spans 373–520 (KTYDAFVSYL…RFWKNLLYLM (148 aa)). Residue E455 is part of the active site.

This sequence belongs to the interleukin-1 receptor family. In terms of assembly, forms a ternary complex with IL18 and IL18RAP. Within this complex, IL18R1 is involved in ligand-binding and IL18RAP in signaling leading to NF-kappa-B and JNK activation. Interacts with SLC12A3 in peritoneal macrophages; this interaction is increased by IL18 treatment. N-glycosylated. N-linked glycosyl chains contribute to ligand recognition and intra-receptor interactions required for formation of an active ternary receptor complex. In terms of tissue distribution, highly expressed in leukocytes, spleen, lung. Also expressed, but at lower levels, in liver, small intestine, colon, prostate, thymus, placenta, and heart. Specifically coexpressed with IL18R1 in Th1 cells.

It is found in the membrane. The catalysed reaction is NAD(+) + H2O = ADP-D-ribose + nicotinamide + H(+). Functionally, within the IL18 receptor complex, responsible for the binding of the pro-inflammatory cytokine IL18, but not IL1A nor IL1B. Involved in IL18-mediated IFNG synthesis from T-helper 1 (Th1) cells. Contributes to IL18-induced cytokine production, either independently of SLC12A3, or as a complex with SLC12A3. This chain is Interleukin-18 receptor 1, found in Homo sapiens (Human).